Here is a 292-residue protein sequence, read N- to C-terminus: uncharacterized protein (292 aa).

Residues 62-81 (ESSSDSDMGFHESQQNQKSN) are disordered.

This is an uncharacterized protein from Homo sapiens (Human).